The chain runs to 264 residues: Taurine import ATP-binding protein TauB (264 aa).

The region spanning 4 to 233 is the ABC transporter domain; the sequence is LQLERISAQY…RYAAGESARA (230 aa). Position 38–45 (38–45) interacts with ATP; sequence GPSGSGKT.

Belongs to the ABC transporter superfamily. Taurine importer (TC 3.A.1.17.1) family. The complex is composed of two ATP-binding proteins (TauB), two transmembrane proteins (TauC) and a solute-binding protein (TauA).

It is found in the cell inner membrane. The enzyme catalyses taurine(out) + ATP + H2O = taurine(in) + ADP + phosphate + H(+). Part of the ABC transporter complex TauABC involved in taurine import. Responsible for energy coupling to the transport system. This is Taurine import ATP-binding protein TauB from Pseudomonas fluorescens (strain ATCC BAA-477 / NRRL B-23932 / Pf-5).